Reading from the N-terminus, the 347-residue chain is S-adenosylmethionine:tRNA ribosyltransferase-isomerase (347 aa).

Belongs to the QueA family. Monomer.

Its subcellular location is the cytoplasm. The enzyme catalyses 7-aminomethyl-7-carbaguanosine(34) in tRNA + S-adenosyl-L-methionine = epoxyqueuosine(34) in tRNA + adenine + L-methionine + 2 H(+). Its pathway is tRNA modification; tRNA-queuosine biosynthesis. Transfers and isomerizes the ribose moiety from AdoMet to the 7-aminomethyl group of 7-deazaguanine (preQ1-tRNA) to give epoxyqueuosine (oQ-tRNA). This Xylella fastidiosa (strain M12) protein is S-adenosylmethionine:tRNA ribosyltransferase-isomerase.